The sequence spans 276 residues: Pyridinium-3,5-bisthiocarboxylic acid mononucleotide synthase (276 aa).

Residue C176 is the Nucleophile and sulfur donor of the active site. C176 is subject to 2,3-didehydroalanine (Cys).

This sequence belongs to the LarE family.

It carries out the reaction pyridinium-3,5-dicarboxylate mononucleotide + [LarE protein]-L-cysteine + ATP = [LarE protein]-dehydroalanine + pyridinium-3-carboxylate-5-thiocarboxylate mononucleotide + AMP + diphosphate + H(+). It catalyses the reaction [LarE protein]-L-cysteine + pyridinium-3-carboxylate-5-thiocarboxylate mononucleotide + ATP = pyridinium-3,5-bisthiocarboxylate mononucleotide + [LarE protein]-dehydroalanine + AMP + diphosphate + H(+). Involved in the biosynthesis of a nickel-pincer cofactor ((SCS)Ni(II) pincer complex). Catalyzes the ATP-dependent incorporation of two sulfur atoms in pyridinium-3,5-biscarboxylic acid mononucleotide (P2CMN) to yield pyridinium-3,5-bisthiocarboxylic acid mononucleotide (P2TMN). The source of sulfur is the enzyme itself: Cys-176 of LarE is the sulfur donor, thereby being converted into dehydroalanine, and is not regenerated in vivo. Thus, two molecules of LarE undergo sacrificial sulfur transfer to create one P2TMN. Binds nickel. Is required for the activation of the lactate racemase LarA. May also be involved in the activation of other nickel-pincer cofactor-dependent enzymes. The chain is Pyridinium-3,5-bisthiocarboxylic acid mononucleotide synthase from Lactiplantibacillus plantarum (strain ATCC BAA-793 / NCIMB 8826 / WCFS1) (Lactobacillus plantarum).